We begin with the raw amino-acid sequence, 279 residues long: Thymidylate synthase (279 aa).

133–134 (RR) is a dUMP binding site. The active-site Nucleophile is the Cys-154. DUMP is bound by residues 178–181 (RSND), Asn-189, and 219–221 (HIY). A (6R)-5,10-methylene-5,6,7,8-tetrahydrofolate-binding site is contributed by Asp-181. A (6R)-5,10-methylene-5,6,7,8-tetrahydrofolate-binding site is contributed by Ala-278.

Belongs to the thymidylate synthase family. Bacterial-type ThyA subfamily. As to quaternary structure, homodimer.

The protein localises to the cytoplasm. It catalyses the reaction dUMP + (6R)-5,10-methylene-5,6,7,8-tetrahydrofolate = 7,8-dihydrofolate + dTMP. It participates in pyrimidine metabolism; dTTP biosynthesis. Functionally, catalyzes the reductive methylation of 2'-deoxyuridine-5'-monophosphate (dUMP) to 2'-deoxythymidine-5'-monophosphate (dTMP) while utilizing 5,10-methylenetetrahydrofolate (mTHF) as the methyl donor and reductant in the reaction, yielding dihydrofolate (DHF) as a by-product. This enzymatic reaction provides an intracellular de novo source of dTMP, an essential precursor for DNA biosynthesis. The polypeptide is Thymidylate synthase (Streptococcus pneumoniae (strain 70585)).